The following is a 66-amino-acid chain: COP-associated protein (66 aa).

Residues 1-66 (MKIDIPVKGM…AILDAGYELG (66 aa)) enclose the HMA domain. Cu cation-binding residues include Cys-12 and Cys-15.

Part of a cation-transporting system which is associated with copper export out of the H.pylori cells. This chain is COP-associated protein (copP), found in Helicobacter felis (strain ATCC 49179 / CCUG 28539 / NCTC 12436 / CS1).